Consider the following 151-residue polypeptide: Spore coat polysaccharide biosynthesis protein SpsL (151 aa).

This sequence to dTDP-4-dehydrorhamnose reductase.

Its pathway is spore coat biogenesis; spore coat polysaccharide biosynthesis. In Bacillus subtilis (strain 168), this protein is Spore coat polysaccharide biosynthesis protein SpsL (spsL).